Here is a 110-residue protein sequence, read N- to C-terminus: U-scoloptoxin(16)-Er6a (110 aa).

Positions 1 to 26 (MTSTRKLSVSCLIVFMVSSLIAVSSG) are cleaved as a signal peptide.

It belongs to the scoloptoxin-16 family. Post-translationally, contains 4 disulfide bonds. In terms of tissue distribution, expressed by the venom gland.

Its subcellular location is the secreted. This is U-scoloptoxin(16)-Er6a from Ethmostigmus rubripes (Giant centipede).